The primary structure comprises 364 residues: Probable dual-specificity RNA methyltransferase RlmN (364 aa).

The Proton acceptor role is filled by Glu-106. In terms of domain architecture, Radical SAM core spans 112 to 350 (YPQRNTVCIS…SCTVRDTRGR (239 aa)). Cys-119 and Cys-356 are disulfide-bonded. The [4Fe-4S] cluster site is built by Cys-126, Cys-130, and Cys-133. Residues 177-178 (GE), Ser-211, 234-236 (SLH), and Asn-313 contribute to the S-adenosyl-L-methionine site. Catalysis depends on Cys-356, which acts as the S-methylcysteine intermediate.

Belongs to the radical SAM superfamily. RlmN family. [4Fe-4S] cluster is required as a cofactor.

It is found in the cytoplasm. It carries out the reaction adenosine(2503) in 23S rRNA + 2 reduced [2Fe-2S]-[ferredoxin] + 2 S-adenosyl-L-methionine = 2-methyladenosine(2503) in 23S rRNA + 5'-deoxyadenosine + L-methionine + 2 oxidized [2Fe-2S]-[ferredoxin] + S-adenosyl-L-homocysteine. It catalyses the reaction adenosine(37) in tRNA + 2 reduced [2Fe-2S]-[ferredoxin] + 2 S-adenosyl-L-methionine = 2-methyladenosine(37) in tRNA + 5'-deoxyadenosine + L-methionine + 2 oxidized [2Fe-2S]-[ferredoxin] + S-adenosyl-L-homocysteine. Functionally, specifically methylates position 2 of adenine 2503 in 23S rRNA and position 2 of adenine 37 in tRNAs. In Mycobacterium ulcerans (strain Agy99), this protein is Probable dual-specificity RNA methyltransferase RlmN.